A 138-amino-acid chain; its full sequence is Ribosome maturation factor RimP (138 aa).

This sequence belongs to the RimP family.

It is found in the cytoplasm. Functionally, required for maturation of 30S ribosomal subunits. The chain is Ribosome maturation factor RimP from Campylobacter curvus (strain 525.92).